The chain runs to 247 residues: Phosphoribosylaminoimidazole-succinocarboxamide synthase (247 aa).

Belongs to the SAICAR synthetase family.

The enzyme catalyses 5-amino-1-(5-phospho-D-ribosyl)imidazole-4-carboxylate + L-aspartate + ATP = (2S)-2-[5-amino-1-(5-phospho-beta-D-ribosyl)imidazole-4-carboxamido]succinate + ADP + phosphate + 2 H(+). It functions in the pathway purine metabolism; IMP biosynthesis via de novo pathway; 5-amino-1-(5-phospho-D-ribosyl)imidazole-4-carboxamide from 5-amino-1-(5-phospho-D-ribosyl)imidazole-4-carboxylate: step 1/2. This chain is Phosphoribosylaminoimidazole-succinocarboxamide synthase, found in Methanopyrus kandleri (strain AV19 / DSM 6324 / JCM 9639 / NBRC 100938).